The primary structure comprises 315 residues: Ribosomal RNA small subunit methyltransferase H (315 aa).

S-adenosyl-L-methionine is bound by residues 42–44, aspartate 59, phenylalanine 96, aspartate 108, and glutamine 115; that span reads GGH.

It belongs to the methyltransferase superfamily. RsmH family.

The protein localises to the cytoplasm. The catalysed reaction is cytidine(1402) in 16S rRNA + S-adenosyl-L-methionine = N(4)-methylcytidine(1402) in 16S rRNA + S-adenosyl-L-homocysteine + H(+). Its function is as follows. Specifically methylates the N4 position of cytidine in position 1402 (C1402) of 16S rRNA. The polypeptide is Ribosomal RNA small subunit methyltransferase H (Gemmatimonas aurantiaca (strain DSM 14586 / JCM 11422 / NBRC 100505 / T-27)).